A 240-amino-acid chain; its full sequence is Large ribosomal subunit protein uL2 (240 aa).

Residues 1 to 20 (MGKRLQSQNRGKGTPRYTSP) are compositionally biased toward polar residues. Disordered regions lie at residues 1 to 33 (MGKR…YRKF) and 204 to 240 (PFGG…TGKR). 2 stretches are compositionally biased toward basic residues: residues 21-30 (THKRKGAVKY) and 224-240 (SPGR…TGKR).

The protein belongs to the universal ribosomal protein uL2 family. In terms of assembly, part of the 50S ribosomal subunit. Forms a bridge to the 30S subunit in the 70S ribosome.

In terms of biological role, one of the primary rRNA binding proteins. Required for association of the 30S and 50S subunits to form the 70S ribosome, for tRNA binding and peptide bond formation. It has been suggested to have peptidyltransferase activity; this is somewhat controversial. Makes several contacts with the 16S rRNA in the 70S ribosome. The chain is Large ribosomal subunit protein uL2 from Methanococcus aeolicus (strain ATCC BAA-1280 / DSM 17508 / OCM 812 / Nankai-3).